Consider the following 144-residue polypeptide: Large ribosomal subunit protein uL13 (144 aa).

This sequence belongs to the universal ribosomal protein uL13 family. Part of the 50S ribosomal subunit.

Functionally, this protein is one of the early assembly proteins of the 50S ribosomal subunit, although it is not seen to bind rRNA by itself. It is important during the early stages of 50S assembly. The chain is Large ribosomal subunit protein uL13 from Clostridium acetobutylicum (strain ATCC 824 / DSM 792 / JCM 1419 / IAM 19013 / LMG 5710 / NBRC 13948 / NRRL B-527 / VKM B-1787 / 2291 / W).